A 256-amino-acid polypeptide reads, in one-letter code: Type III pantothenate kinase (256 aa).

6-13 contacts ATP; that stretch reads DVGNSHIY. Substrate-binding positions include Y99 and 106–109; that span reads GADR. Residue D108 is the Proton acceptor of the active site. A K(+)-binding site is contributed by D129. T132 serves as a coordination point for ATP. Position 184 (T184) interacts with substrate.

Belongs to the type III pantothenate kinase family. As to quaternary structure, homodimer. It depends on NH4(+) as a cofactor. K(+) serves as cofactor.

The protein localises to the cytoplasm. It carries out the reaction (R)-pantothenate + ATP = (R)-4'-phosphopantothenate + ADP + H(+). Its pathway is cofactor biosynthesis; coenzyme A biosynthesis; CoA from (R)-pantothenate: step 1/5. In terms of biological role, catalyzes the phosphorylation of pantothenate (Pan), the first step in CoA biosynthesis. This is Type III pantothenate kinase from Legionella pneumophila (strain Corby).